The primary structure comprises 451 residues: Glycylpeptide N-tetradecanoyltransferase (451 aa).

Residues Tyr-34–Trp-37, Leu-167–Val-169, and Ser-175–Thr-179 each bind tetradecanoyl-CoA. The active-site Proton acceptor; via carboxylate is the Leu-451.

The protein belongs to the NMT family. As to quaternary structure, monomer.

Its subcellular location is the cytoplasm. The catalysed reaction is N-terminal glycyl-[protein] + tetradecanoyl-CoA = N-tetradecanoylglycyl-[protein] + CoA + H(+). In terms of biological role, adds a myristoyl group to the N-terminal glycine residue of certain cellular proteins. The chain is Glycylpeptide N-tetradecanoyltransferase (NMT1) from Candida glabrata (strain ATCC 2001 / BCRC 20586 / JCM 3761 / NBRC 0622 / NRRL Y-65 / CBS 138) (Yeast).